The sequence spans 97 residues: uncharacterized protein (97 aa).

Belongs to the mycobacterial PE family.

Part of the ESX-1 / type VII specialized secretion system (T7SS), which exports several proteins including EsxA and EsxB. Plays a role in DNA conjugation, in at least a donor strain. This is an uncharacterized protein from Mycolicibacterium smegmatis (strain ATCC 700084 / mc(2)155) (Mycobacterium smegmatis).